Consider the following 212-residue polypeptide: CRIB domain-containing protein RIC6 (212 aa).

The CRIB domain occupies Ile-34–Gly-47. The segment at Pro-51 to Phe-212 is disordered. Residues Ala-53–Asn-65 show a composition bias toward polar residues. A compositionally biased stretch (basic and acidic residues) spans Ala-106–Lys-121. Over residues Glu-192 to Ser-202 the composition is skewed to polar residues.

In terms of assembly, interacts with ARAC11/ROP1. Expressed in flowers and pollen.

It localises to the cell membrane. In terms of biological role, functions as a downstream effector of Rho-related GTP binding proteins of the 'Rho of Plants' (ROPs) family. Participates in the propagation of ROP GTPase signals in specific cellular responses. Is involved in pollen tube growth regulation through its interaction with ARAC11/ROP1. In Arabidopsis thaliana (Mouse-ear cress), this protein is CRIB domain-containing protein RIC6 (RIC6).